The following is a 342-amino-acid chain: Autoinducer 2 import system permease protein LsrC (342 aa).

At 1–13 (MLKFIQNNREITA) the chain is on the periplasmic side. The helical transmembrane segment at 14–34 (LLAVLLLFVLPGFLDRQYLSV) threads the bilayer. At 35–38 (QTLT) the chain is on the cytoplasmic side. The helical transmembrane segment at 39–59 (MVYSSAQILILLAMGATLVML) threads the bilayer. At 60–69 (TRNIDVSVGS) the chain is on the periplasmic side. Residues 70–90 (ITGMCAVLLGMLLNAGYSLPV) traverse the membrane as a helical segment. Over 91–92 (AC) the chain is Cytoplasmic. The helical transmembrane segment at 93-113 (VATLLLGLLAGFFNGVLVAWL) threads the bilayer. Residue K114 is a topological domain, periplasmic. A helical transmembrane segment spans residues 115–135 (IPAIVATLGTLGLYRGIMLLW). Residues 136 to 154 (TGGKWIEGLPAELKQLSAP) are Cytoplasmic-facing. A helical transmembrane segment spans residues 155–175 (LLLGVSAIGWLTIILVAFMAW). Residues 176-212 (LLAKTAFGRSFYATGDNLQGARQLGVRTEAIRIVAFS) lie on the Periplasmic side of the membrane. A helical membrane pass occupies residues 213–233 (LNGCMAALAGIVFASQIGFIP). Residues 234 to 251 (NQTGTGLEMKAIAACVLG) lie on the Cytoplasmic side of the membrane. The helical transmembrane segment at 252-272 (GISLLGGSGAIIGAVLGAWFL) threads the bilayer. The Periplasmic segment spans residues 273 to 283 (TQIDSVLVLLR). The chain crosses the membrane as a helical span at residues 284-304 (IPAWWNDFIAGLVLLAVLVFD). The Cytoplasmic portion of the chain corresponds to 305–342 (GRLRCALELNLRRQKYARFMTPPPSVKPASSGKKREAA).

It belongs to the binding-protein-dependent transport system permease family. AraH/RbsC subfamily. In terms of assembly, the complex is composed of two ATP-binding proteins (LsrA), two transmembrane proteins (LsrC and LsrD) and a solute-binding protein (LsrB).

Its subcellular location is the cell inner membrane. Its function is as follows. Part of the ABC transporter complex LsrABCD involved in autoinducer 2 (AI-2) import. Probably responsible for the translocation of the substrate across the membrane. The protein is Autoinducer 2 import system permease protein LsrC (lsrC) of Escherichia coli O157:H7.